The following is a 281-amino-acid chain: Pantothenate synthetase (281 aa).

Methionine 30 to histidine 37 lines the ATP pocket. The active-site Proton donor is histidine 37. Glutamine 61 serves as a coordination point for (R)-pantoate. Glutamine 61 contributes to the beta-alanine binding site. ATP is bound at residue glycine 147–aspartate 150. (R)-pantoate is bound at residue glutamine 153. ATP is bound by residues isoleucine 176 and leucine 184–arginine 187.

Belongs to the pantothenate synthetase family. Homodimer.

It is found in the cytoplasm. It catalyses the reaction (R)-pantoate + beta-alanine + ATP = (R)-pantothenate + AMP + diphosphate + H(+). It participates in cofactor biosynthesis; (R)-pantothenate biosynthesis; (R)-pantothenate from (R)-pantoate and beta-alanine: step 1/1. Catalyzes the condensation of pantoate with beta-alanine in an ATP-dependent reaction via a pantoyl-adenylate intermediate. The protein is Pantothenate synthetase of Porphyromonas gingivalis (strain ATCC 33277 / DSM 20709 / CIP 103683 / JCM 12257 / NCTC 11834 / 2561).